A 223-amino-acid polypeptide reads, in one-letter code: Alpha-S2-casein (223 aa).

The N-terminal stretch at 1-15 (MKLFIFTCLLAVALA) is a signal peptide. 8 positions are modified to phosphoserine: Ser-23, Ser-24, Ser-25, Ser-28, Ser-46, Ser-71, Ser-72, and Ser-73. 2 consecutive repeats follow at residues 76–128 (FADI…TLGK) and 129–223 (EQIS…ERQA). Phosphoserine is present on residues Ser-132, Ser-147, and Ser-155.

It belongs to the alpha-casein family. In terms of tissue distribution, mammary gland specific. Secreted in milk.

The protein localises to the secreted. Important role in the capacity of milk to transport calcium phosphate. The polypeptide is Alpha-S2-casein (CSN1S2) (Cavia porcellus (Guinea pig)).